Consider the following 347-residue polypeptide: Homeobox protein knotted-1-like 9 (347 aa).

Low complexity predominate over residues 1 to 17; sequence MESFASLAGGGSSSTTA. Disordered regions lie at residues 1–36, 122–145, and 179–206; these read MESF…PPPL, QQLD…DVPD, and DSNC…DPSD. Residues 22 to 36 are compositionally biased toward pro residues; that stretch reads LIPPENPDRISPPPL. The segment covering 188-203 has biased composition (acidic residues); the sequence is SEEEQDTSCPEAEEID. The ELK domain maps to 208 to 228; the sequence is QLKHQLLMKYGGSLGDLRQAF. Positions 229–293 form a DNA-binding region, homeobox; TALE-type; sequence SKRTKKGKLP…NQRKRHWKPT (65 aa).

It belongs to the TALE/KNOX homeobox family.

The protein localises to the nucleus. This Oryza sativa subsp. japonica (Rice) protein is Homeobox protein knotted-1-like 9.